Here is an 83-residue protein sequence, read N- to C-terminus: Small ribosomal subunit protein eS21 (83 aa).

The protein belongs to the eukaryotic ribosomal protein eS21 family. In terms of assembly, component of the 40S small ribosomal subunit.

It localises to the cytoplasm. The protein localises to the cytosol. Its subcellular location is the rough endoplasmic reticulum. The polypeptide is Small ribosomal subunit protein eS21 (RpS21) (Spodoptera frugiperda (Fall armyworm)).